We begin with the raw amino-acid sequence, 162 residues long: D-aminoacyl-tRNA deacylase (162 aa).

The Gly-cisPro motif, important for rejection of L-amino acids motif lies at 145 to 146; sequence GP.

This sequence belongs to the DTD family. As to quaternary structure, homodimer.

The protein resides in the cytoplasm. It catalyses the reaction glycyl-tRNA(Ala) + H2O = tRNA(Ala) + glycine + H(+). The catalysed reaction is a D-aminoacyl-tRNA + H2O = a tRNA + a D-alpha-amino acid + H(+). In terms of biological role, an aminoacyl-tRNA editing enzyme that deacylates mischarged D-aminoacyl-tRNAs. Also deacylates mischarged glycyl-tRNA(Ala), protecting cells against glycine mischarging by AlaRS. Acts via tRNA-based rather than protein-based catalysis; rejects L-amino acids rather than detecting D-amino acids in the active site. By recycling D-aminoacyl-tRNA to D-amino acids and free tRNA molecules, this enzyme counteracts the toxicity associated with the formation of D-aminoacyl-tRNA entities in vivo and helps enforce protein L-homochirality. The protein is D-aminoacyl-tRNA deacylase of Bifidobacterium longum (strain DJO10A).